The chain runs to 1411 residues: Uveal autoantigen with coiled-coil domains and ankyrin repeats (1411 aa).

An N-acetylmethionine modification is found at Met-1. Positions 1–30 are disordered; sequence MKSLKSRLWKQDAPGPTSPSSPTAVASTQS. The span at 13 to 30 shows a compositional bias: low complexity; that stretch reads APGPTSPSSPTAVASTQS. ANK repeat units lie at residues 69-98, 102-131, 135-164, 168-197, 201-230, and 234-263; these read EGRS…DVAT, AGRN…PTEH, QGRT…SVNA, DGRT…DVNS, QNRT…DLTL, and LGHD…NTNK. Residues 263–301 are disordered; sequence KGRELWRKGPPLQQRNLSHTQDEGSVKSTQREQREPHSF. Phosphoserine is present on Ser-280. Over residues 282 to 301 the composition is skewed to basic and acidic residues; it reads TQDEGSVKSTQREQREPHSF. Coiled coils occupy residues 299-379, 442-624, and 652-1380; these read HSFQ…NRFK, SENE…LKEL, and VKRL…AIYR. A disordered region spans residues 1006 to 1031; it reads GLKEQLSEQTHKCRQRDEEVKKGKQE.

Component of the apoptosome complex, composed of APAF1, pro-caspase-9 and UACA. In the complex, it probably interacts directly with APAF1. Interacts with LGALS3, ARF6 and ACTB. Interacts with RAB39A. In terms of tissue distribution, highly expressed in heart, liver, kidney and testis. Weakly expressed in lung and skeletal muscle. Not expressed in brain and spleen.

The protein resides in the nucleus. The protein localises to the cytoplasm. It is found in the cytoskeleton. In terms of biological role, regulates APAF1 expression and plays an important role in the regulation of stress-induced apoptosis. Promotes apoptosis by regulating three pathways, apoptosome up-regulation, LGALS3/galectin-3 down-regulation and NF-kappa-B inactivation. Regulates the redistribution of APAF1 into the nucleus after proapoptotic stress. Down-regulates the expression of LGALS3 by inhibiting NFKB1. Its function is as follows. Modulates isoactin dynamics to regulate the morphological alterations required for cell growth and motility. Interaction with ARF6 may modulate cell shape and motility after injury. May be involved in multiple neurite formation. This is Uveal autoantigen with coiled-coil domains and ankyrin repeats (Uaca) from Mus musculus (Mouse).